Reading from the N-terminus, the 1216-residue chain is ATP-dependent helicase/nuclease subunit A (1216 aa).

The 463-residue stretch at glutamine 26–serine 488 folds into the UvrD-like helicase ATP-binding domain. An ATP-binding site is contributed by alanine 47–threonine 54. The region spanning lysine 515–glycine 802 is the UvrD-like helicase C-terminal domain.

The protein belongs to the helicase family. AddA subfamily. As to quaternary structure, heterodimer of AddA and AddB/RexB. Requires Mg(2+) as cofactor.

The enzyme catalyses Couples ATP hydrolysis with the unwinding of duplex DNA by translocating in the 3'-5' direction.. The catalysed reaction is ATP + H2O = ADP + phosphate + H(+). The heterodimer acts as both an ATP-dependent DNA helicase and an ATP-dependent, dual-direction single-stranded exonuclease. Recognizes the chi site generating a DNA molecule suitable for the initiation of homologous recombination. The AddA nuclease domain is required for chi fragment generation; this subunit has the helicase and 3' -&gt; 5' nuclease activities. This is ATP-dependent helicase/nuclease subunit A from Streptococcus pneumoniae serotype 2 (strain D39 / NCTC 7466).